The chain runs to 355 residues: 5-formaminoimidazole-4-carboxamide-1-(beta)-D-ribofuranosyl 5'-monophosphate synthetase (355 aa).

2 residues coordinate 5-amino-1-(5-phospho-beta-D-ribosyl)imidazole-4-carboxamide: His27 and Ser94. Residues 101–332 form the ATP-grasp domain; it reads TESFAELAVP…YSDMIEENLS (232 aa). ATP is bound by residues 144-195 and Glu225; that span reads PEKI…TRYY. Asn254 lines the 5-amino-1-(5-phospho-beta-D-ribosyl)imidazole-4-carboxamide pocket. Mg(2+)-binding residues include Glu292 and Glu305.

Belongs to the phosphohexose mutase family. The cofactor is Mg(2+). Requires Mn(2+) as cofactor.

The enzyme catalyses 5-amino-1-(5-phospho-beta-D-ribosyl)imidazole-4-carboxamide + formate + ATP = 5-formamido-1-(5-phospho-D-ribosyl)imidazole-4-carboxamide + ADP + phosphate. Its pathway is purine metabolism; IMP biosynthesis via de novo pathway; 5-formamido-1-(5-phospho-D-ribosyl)imidazole-4-carboxamide from 5-amino-1-(5-phospho-D-ribosyl)imidazole-4-carboxamide (formate route): step 1/1. Catalyzes the ATP- and formate-dependent formylation of 5-aminoimidazole-4-carboxamide-1-beta-d-ribofuranosyl 5'-monophosphate (AICAR) to 5-formaminoimidazole-4-carboxamide-1-beta-d-ribofuranosyl 5'-monophosphate (FAICAR) in the absence of folates. This chain is 5-formaminoimidazole-4-carboxamide-1-(beta)-D-ribofuranosyl 5'-monophosphate synthetase, found in Methanococcoides burtonii (strain DSM 6242 / NBRC 107633 / OCM 468 / ACE-M).